Consider the following 510-residue polypeptide: Calmodulin-binding receptor-like cytoplasmic kinase 3 (510 aa).

A signal peptide spans Met1–Ala30. The segment covering Val166–Ile178 has biased composition (polar residues). The interval Val166 to Gly209 is disordered. Thr214 is modified (phosphothreonine). One can recognise a Protein kinase domain in the interval Phe225 to Ala499. Residues Ile231–Val239 and Lys253 contribute to the ATP site. Residues Phe240–Thr265 form a caM-binding region. Asp350 acts as the Proton acceptor in catalysis. Ser354 carries the phosphoserine modification. Residues Thr386 and Thr391 each carry the phosphothreonine modification. Tyr399 carries the post-translational modification Phosphotyrosine.

It belongs to the protein kinase superfamily. Ser/Thr protein kinase family. Interacts with calmodulin (CaM) in a Ca(2+)-dependent manner.

Its subcellular location is the cytoplasm. The enzyme catalyses L-seryl-[protein] + ATP = O-phospho-L-seryl-[protein] + ADP + H(+). It catalyses the reaction L-threonyl-[protein] + ATP = O-phospho-L-threonyl-[protein] + ADP + H(+). The polypeptide is Calmodulin-binding receptor-like cytoplasmic kinase 3 (CRCK3) (Arabidopsis thaliana (Mouse-ear cress)).